Consider the following 231-residue polypeptide: 7-cyano-7-deazaguanine synthase (231 aa).

7–17 (LSSGLDSVAAL) provides a ligand contact to ATP. Zn(2+) contacts are provided by Cys195, Cys203, Cys206, and Cys209.

It belongs to the QueC family. The cofactor is Zn(2+).

The catalysed reaction is 7-carboxy-7-deazaguanine + NH4(+) + ATP = 7-cyano-7-deazaguanine + ADP + phosphate + H2O + H(+). It participates in purine metabolism; 7-cyano-7-deazaguanine biosynthesis. Functionally, catalyzes the ATP-dependent conversion of 7-carboxy-7-deazaguanine (CDG) to 7-cyano-7-deazaguanine (preQ(0)). In Methanosarcina barkeri (strain Fusaro / DSM 804), this protein is 7-cyano-7-deazaguanine synthase.